Here is a 185-residue protein sequence, read N- to C-terminus: Acireductone dioxygenase (185 aa).

His96, His98, Glu102, and His140 together coordinate Fe(2+). Residues His96, His98, Glu102, and His140 each contribute to the Ni(2+) site.

This sequence belongs to the acireductone dioxygenase (ARD) family. Monomer. Fe(2+) serves as cofactor. Ni(2+) is required as a cofactor.

It catalyses the reaction 1,2-dihydroxy-5-(methylsulfanyl)pent-1-en-3-one + O2 = 3-(methylsulfanyl)propanoate + CO + formate + 2 H(+). It carries out the reaction 1,2-dihydroxy-5-(methylsulfanyl)pent-1-en-3-one + O2 = 4-methylsulfanyl-2-oxobutanoate + formate + 2 H(+). It functions in the pathway amino-acid biosynthesis; L-methionine biosynthesis via salvage pathway; L-methionine from S-methyl-5-thio-alpha-D-ribose 1-phosphate: step 5/6. Functionally, catalyzes 2 different reactions between oxygen and the acireductone 1,2-dihydroxy-3-keto-5-methylthiopentene (DHK-MTPene) depending upon the metal bound in the active site. Fe-containing acireductone dioxygenase (Fe-ARD) produces formate and 2-keto-4-methylthiobutyrate (KMTB), the alpha-ketoacid precursor of methionine in the methionine recycle pathway. Ni-containing acireductone dioxygenase (Ni-ARD) produces methylthiopropionate, carbon monoxide and formate, and does not lie on the methionine recycle pathway. The chain is Acireductone dioxygenase from Marinobacter nauticus (strain ATCC 700491 / DSM 11845 / VT8) (Marinobacter aquaeolei).